The sequence spans 466 residues: Cytochrome b561 and DOMON domain-containing protein At3g59070 (466 aa).

An N-terminal signal peptide occupies residues M1 to A25. One can recognise a DOMON domain in the interval L57 to G172. Residues R179–W380 enclose the Cytochrome b561 domain. 3 helical membrane-spanning segments follow: residues I219–A239, W252–L272, and T287–L307. Residues H220, H256, H289, and H325 each coordinate heme b. 2 consecutive transmembrane segments (helical) span residues T327–L347 and I355–Q375.

Heme b serves as cofactor.

The protein resides in the membrane. In terms of biological role, may act as a catecholamine-responsive trans-membrane electron transporter. The protein is Cytochrome b561 and DOMON domain-containing protein At3g59070 of Arabidopsis thaliana (Mouse-ear cress).